The chain runs to 123 residues: Large ribosomal subunit protein bL19c (123 aa).

Belongs to the bacterial ribosomal protein bL19 family.

It localises to the plastid. The protein resides in the chloroplast. This chain is Large ribosomal subunit protein bL19c (rpl19), found in Porphyra purpurea (Red seaweed).